The primary structure comprises 122 residues: Large ribosomal subunit protein uL14 (122 aa).

The protein belongs to the universal ribosomal protein uL14 family. In terms of assembly, part of the 50S ribosomal subunit. Forms a cluster with proteins L3 and L19. In the 70S ribosome, L14 and L19 interact and together make contacts with the 16S rRNA in bridges B5 and B8.

Binds to 23S rRNA. Forms part of two intersubunit bridges in the 70S ribosome. The chain is Large ribosomal subunit protein uL14 from Acetivibrio thermocellus (strain ATCC 27405 / DSM 1237 / JCM 9322 / NBRC 103400 / NCIMB 10682 / NRRL B-4536 / VPI 7372) (Clostridium thermocellum).